The following is a 294-amino-acid chain: Cytidine deaminase (294 aa).

CMP/dCMP-type deaminase domains follow at residues 48–168 and 186–294; these read DEDA…FGPK and LTGD…VLLG. 89–91 provides a ligand contact to substrate; sequence NME. Zn(2+) is bound at residue histidine 102. Catalysis depends on glutamate 104, which acts as the Proton donor. Zn(2+) is bound by residues cysteine 129 and cysteine 132.

It belongs to the cytidine and deoxycytidylate deaminase family. As to quaternary structure, homodimer. Zn(2+) is required as a cofactor.

The enzyme catalyses cytidine + H2O + H(+) = uridine + NH4(+). It carries out the reaction 2'-deoxycytidine + H2O + H(+) = 2'-deoxyuridine + NH4(+). In terms of biological role, this enzyme scavenges exogenous and endogenous cytidine and 2'-deoxycytidine for UMP synthesis. The sequence is that of Cytidine deaminase from Salmonella dublin (strain CT_02021853).